Reading from the N-terminus, the 270-residue chain is Flagellar hook-basal body complex protein FlhO (270 aa).

It belongs to the flagella basal body rod proteins family.

Not required for motility. This chain is Flagellar hook-basal body complex protein FlhO (flhO), found in Bacillus subtilis (strain 168).